The following is a 150-amino-acid chain: Small ribosomal subunit protein eS19S (150 aa).

It belongs to the eukaryotic ribosomal protein eS19 family.

The protein is Small ribosomal subunit protein eS19S (RPS19S) of Ascaris suum (Pig roundworm).